The primary structure comprises 123 residues: Ribosome-binding factor A (123 aa).

Belongs to the RbfA family. As to quaternary structure, monomer. Binds 30S ribosomal subunits, but not 50S ribosomal subunits or 70S ribosomes.

It localises to the cytoplasm. Functionally, one of several proteins that assist in the late maturation steps of the functional core of the 30S ribosomal subunit. Associates with free 30S ribosomal subunits (but not with 30S subunits that are part of 70S ribosomes or polysomes). Required for efficient processing of 16S rRNA. May interact with the 5'-terminal helix region of 16S rRNA. This chain is Ribosome-binding factor A, found in Chlamydia trachomatis serovar L2 (strain ATCC VR-902B / DSM 19102 / 434/Bu).